A 378-amino-acid polypeptide reads, in one-letter code: MIKNECEKDNQLAARLAKLAGYEKVNGFYKFVNTPEKEMENLGGLLKIVKNLFPDSEEQLLSEYFLELDPNKKCARQSVEYSDINQWDTLTDKIIINLCNSKNSTSQEWGKVYSLHRKLNKNEISLNDAIRESGKCKIKSAEMLFFSNAMLMYAYLNIGEFGLMKSTSKLLEFDDLPEGFIKESFKSRVSMLEANISLNENSLLEARQHSNRAIENSNVNRICFFAYLTIGNTLIFEDYDEAKKAYIKGQKYAKNPVHQEMLDGALCFLSNIWKKENQWVNYNSDNIKYLQLRAFYYINQGNIEEATEILDELSSRDQDENELGFYYYYKGLISQDKTDYYKSIRYFKKSDDKYFIQLPLLQLERMGADLELLNLISI.

As to quaternary structure, homodimer. Interacts with the viral arbitrium peptide, this interaction changes the oligomeric state of AimR from an active dimer to an inactive monomer leading to lysogeny.

Functionally, transcriptional regulator which is part of the latency-replication switch system that decides at the onset of infection whether to replicate and lyse the host or to lysogenize (latency) and keep the host viable. Activates the transcription of the aimX locus. Transcriptional activation of aimX seems to lead to the productive viral replication (lytic cycle), aimX possibly acting as a regulatory non-coding RNA. The chain is AimR transcriptional regulator (aimR) from Bacillus phage phi3T (Bacteriophage phi-3T).